The primary structure comprises 459 residues: Bifunctional protein GlmU (459 aa).

Residues 1 to 229 (MTNYAIILAA…FDESLGVNDR (229 aa)) form a pyrophosphorylase region. Residues 8–11 (LAAG), Lys22, Gln72, and 77–78 (GT) each bind UDP-N-acetyl-alpha-D-glucosamine. Asp102 provides a ligand contact to Mg(2+). UDP-N-acetyl-alpha-D-glucosamine is bound by residues Gly139, Glu154, Asn169, and Asn227. Asn227 contributes to the Mg(2+) binding site. A linker region spans residues 230–250 (VALAKAEKVMRRRINHAHMVN). The segment at 251–459 (GVTLTNPAST…KKKPHHPNNK (209 aa)) is N-acetyltransferase. UDP-N-acetyl-alpha-D-glucosamine is bound by residues Arg332 and Lys350. His362 functions as the Proton acceptor in the catalytic mechanism. Positions 365 and 376 each coordinate UDP-N-acetyl-alpha-D-glucosamine. Residues Ala379, 385–386 (NY), Ser404, Ala422, and Arg439 each bind acetyl-CoA.

In the N-terminal section; belongs to the N-acetylglucosamine-1-phosphate uridyltransferase family. This sequence in the C-terminal section; belongs to the transferase hexapeptide repeat family. As to quaternary structure, homotrimer. The cofactor is Mg(2+).

Its subcellular location is the cytoplasm. The catalysed reaction is alpha-D-glucosamine 1-phosphate + acetyl-CoA = N-acetyl-alpha-D-glucosamine 1-phosphate + CoA + H(+). The enzyme catalyses N-acetyl-alpha-D-glucosamine 1-phosphate + UTP + H(+) = UDP-N-acetyl-alpha-D-glucosamine + diphosphate. It functions in the pathway nucleotide-sugar biosynthesis; UDP-N-acetyl-alpha-D-glucosamine biosynthesis; N-acetyl-alpha-D-glucosamine 1-phosphate from alpha-D-glucosamine 6-phosphate (route II): step 2/2. It participates in nucleotide-sugar biosynthesis; UDP-N-acetyl-alpha-D-glucosamine biosynthesis; UDP-N-acetyl-alpha-D-glucosamine from N-acetyl-alpha-D-glucosamine 1-phosphate: step 1/1. The protein operates within bacterial outer membrane biogenesis; LPS lipid A biosynthesis. Its function is as follows. Catalyzes the last two sequential reactions in the de novo biosynthetic pathway for UDP-N-acetylglucosamine (UDP-GlcNAc). The C-terminal domain catalyzes the transfer of acetyl group from acetyl coenzyme A to glucosamine-1-phosphate (GlcN-1-P) to produce N-acetylglucosamine-1-phosphate (GlcNAc-1-P), which is converted into UDP-GlcNAc by the transfer of uridine 5-monophosphate (from uridine 5-triphosphate), a reaction catalyzed by the N-terminal domain. The sequence is that of Bifunctional protein GlmU from Streptococcus mutans serotype c (strain ATCC 700610 / UA159).